The sequence spans 507 residues: ATP synthase subunit alpha, chloroplastic (507 aa).

Residue glycine 170–threonine 177 participates in ATP binding.

Belongs to the ATPase alpha/beta chains family. F-type ATPases have 2 components, CF(1) - the catalytic core - and CF(0) - the membrane proton channel. CF(1) has five subunits: alpha(3), beta(3), gamma(1), delta(1), epsilon(1). CF(0) has four main subunits: a, b, b' and c.

The protein localises to the plastid. The protein resides in the chloroplast thylakoid membrane. The enzyme catalyses ATP + H2O + 4 H(+)(in) = ADP + phosphate + 5 H(+)(out). Its function is as follows. Produces ATP from ADP in the presence of a proton gradient across the membrane. The alpha chain is a regulatory subunit. The polypeptide is ATP synthase subunit alpha, chloroplastic (Solanum bulbocastanum (Wild potato)).